We begin with the raw amino-acid sequence, 119 residues long: Large ribosomal subunit protein uL22 (119 aa).

This sequence belongs to the universal ribosomal protein uL22 family. Part of the 50S ribosomal subunit.

This protein binds specifically to 23S rRNA; its binding is stimulated by other ribosomal proteins, e.g. L4, L17, and L20. It is important during the early stages of 50S assembly. It makes multiple contacts with different domains of the 23S rRNA in the assembled 50S subunit and ribosome. In terms of biological role, the globular domain of the protein is located near the polypeptide exit tunnel on the outside of the subunit, while an extended beta-hairpin is found that lines the wall of the exit tunnel in the center of the 70S ribosome. In Bifidobacterium longum (strain DJO10A), this protein is Large ribosomal subunit protein uL22.